We begin with the raw amino-acid sequence, 257 residues long: Type III pantothenate kinase (257 aa).

6–13 (DCGNTNTV) provides a ligand contact to ATP. 107–110 (GPDR) serves as a coordination point for substrate. Aspartate 109 (proton acceptor) is an active-site residue. K(+) is bound at residue aspartate 129. Threonine 132 serves as a coordination point for ATP. Threonine 184 is a substrate binding site.

This sequence belongs to the type III pantothenate kinase family. Homodimer. The cofactor is NH4(+). K(+) serves as cofactor.

It localises to the cytoplasm. The catalysed reaction is (R)-pantothenate + ATP = (R)-4'-phosphopantothenate + ADP + H(+). It participates in cofactor biosynthesis; coenzyme A biosynthesis; CoA from (R)-pantothenate: step 1/5. Catalyzes the phosphorylation of pantothenate (Pan), the first step in CoA biosynthesis. This is Type III pantothenate kinase from Cereibacter sphaeroides (strain ATCC 17025 / ATH 2.4.3) (Rhodobacter sphaeroides).